The chain runs to 573 residues: Phosphoenolpyruvate-protein phosphotransferase (573 aa).

H190 acts as the Tele-phosphohistidine intermediate in catalysis. R297 and R333 together coordinate substrate. Residues E432 and D456 each contribute to the Mg(2+) site. 455–456 (ND) provides a ligand contact to phosphoenolpyruvate. R466 contacts substrate. C503 acts as the Proton donor in catalysis.

Belongs to the PEP-utilizing enzyme family. As to quaternary structure, homodimer. Mg(2+) is required as a cofactor.

It is found in the cytoplasm. It carries out the reaction L-histidyl-[protein] + phosphoenolpyruvate = N(pros)-phospho-L-histidyl-[protein] + pyruvate. Functionally, general (non sugar-specific) component of the phosphoenolpyruvate-dependent sugar phosphotransferase system (sugar PTS). This major carbohydrate active-transport system catalyzes the phosphorylation of incoming sugar substrates concomitantly with their translocation across the cell membrane. Enzyme I transfers the phosphoryl group from phosphoenolpyruvate (PEP) to the phosphoryl carrier protein (HPr). The chain is Phosphoenolpyruvate-protein phosphotransferase (ptsI) from Staphylococcus carnosus (strain TM300).